Consider the following 265-residue polypeptide: MIKWPWKVQESAHQTALPWQEALSIPLLTCLTEQEQSKLVALAERFLQQKRLVPLQGFELNSLRSCRIALLFCLPVLELGLEWLDGFHEILIYPAPFVVDDEWEDDIGLVHNQRIVQSGQSWQQGPIVLNWLDIQDSFDASGFNLIIHEVAHKLDTRNGDRASGVPFISLREVAGWEHDLHAAMNNIQEEIELVGENAASIDAYAASDPAECFAVLSEYFFSAPELFAPRFPSLWQRFCQFYQQDPLQRLHHANDTDSFSATNVH.

Zn(2+) contacts are provided by His111, His148, His152, and Glu211.

It belongs to the MtfA family. As to quaternary structure, interacts with Mlc. It depends on Zn(2+) as a cofactor.

The protein resides in the cytoplasm. Functionally, involved in the modulation of the activity of the glucose-phosphotransferase system (glucose-PTS). Interacts with the transcriptional repressor Mlc, preventing its interaction with DNA and leading to the modulation of expression of genes regulated by Mlc, including ptsG, which encodes the PTS system glucose-specific EIICB component. Shows zinc-dependent metallopeptidase activity. This Escherichia coli O7:K1 (strain IAI39 / ExPEC) protein is Mlc titration factor A.